The chain runs to 327 residues: uncharacterized protein (327 aa).

The span at 1-17 shows a compositional bias: low complexity; that stretch reads MASMAAAIAASRSAVMS. Residues 1–22 are disordered; the sequence is MASMAAAIAASRSAVMSGNRPL. Ala-2 carries the post-translational modification N-acetylalanine. Phosphoserine is present on Ser-37. Residues 76 to 113 form a disordered region; the sequence is GPRAPAPRDPGDSEELTRFPGLRGPTGQKVVRFGDEDL. Ser-129 is subject to Phosphoserine. Positions 134–148 are enriched in polar residues; that stretch reads SISALSIQEPSNGTA. Residues 134 to 299 form a disordered region; the sequence is SISALSIQEP…PDVRQDDGED (166 aa). Positions 162-176 are enriched in low complexity; sequence SQALKSSQGSRSSSL. Position 175 is a phosphoserine (Ser-175). Composition is skewed to basic and acidic residues over residues 182–202 and 233–252; these read TRKE…RGEG and PAPK…RQEQ. Position 289 is a phosphoserine (Ser-289).

It is found in the cytoplasm. This is an uncharacterized protein from Homo sapiens (Human).